Reading from the N-terminus, the 311-residue chain is Putative F-box protein At3g28280 (311 aa).

The 43-residue stretch at 1-43 folds into the F-box domain; sequence MNSLPEDLLAMILVKLPIKIFTTFKIVCTQWESMVDSPYFRDL.

The sequence is that of Putative F-box protein At3g28280 from Arabidopsis thaliana (Mouse-ear cress).